The primary structure comprises 214 residues: Cell division protein SepF (214 aa).

The disordered stretch occupies residues 23 to 70 (YYDDRAPSRGFPRPRFDDGYGRYDGDDYDDPRREPADYPPPAGYRGGY). Residues 36–58 (PRFDDGYGRYDGDDYDDPRREPA) are compositionally biased toward basic and acidic residues.

Belongs to the SepF family. As to quaternary structure, homodimer. Interacts with FtsZ.

The protein localises to the cytoplasm. Functionally, cell division protein that is part of the divisome complex and is recruited early to the Z-ring. Probably stimulates Z-ring formation, perhaps through the cross-linking of FtsZ protofilaments. Its function overlaps with FtsA. In Mycobacterium avium (strain 104), this protein is Cell division protein SepF.